The following is a 229-amino-acid chain: Matrix protein (229 aa).

Positions 2 to 4 (QRL) match the dynamin binding motif. The PPXY motif signature appears at 30 to 33 (PPSY). A PTAP/PSAP motif motif is present at residues 42-45 (PTAP).

The protein belongs to the vesiculoviruses matrix protein family. As to quaternary structure, homomultimer. Interacts with viral nucleocapsid; this interaction contributes to the virion assembly. Interacts with the viral envelope glycoprotein; this interaction contributes to the virion assembly. Interacts with host RAE1-NUP98 complex. Interacts with host NEDD4 and TSG101. Interacts with host dynamin. Interacts with host NDUFAF4; the interaction inhibits viral propagation and is independent of interferon activation. Interacts with host GTF2H5; the interaction may inhibit host transcription. Interacts with host DRG1. Interaction with host CTDNEP1. Interaction with host ABCE1. Phosphorylated by host.

The protein localises to the virion. The protein resides in the host endomembrane system. It localises to the host nucleus membrane. Its subcellular location is the host nucleus. It is found in the host cytoplasm. Functionally, forms a double layer around the helical nucleocapsid, the inner matrix layer binding to the N helix and the outer matrix layer binding to the envelope glycoprotein. Plays a major role in assembly and budding of virion, by recruiting cellular partners of the ESCRT complexes that play a key role in releasing the budding particle from the host membrane. Condensates the ribonucleocapsid core during virus assembly. Inhibits the host mRNA nuclear export thereby inducing the shut off of cellular transcription and preventing the interferon signaling and the establishment of antiviral state in infected cells. This shutoff presumably inhibits interferon signaling and thus establishment of antiviral state in virus infected cells. Induces cell-rounding, cytoskeleton disorganization and apoptosis in infected cell. Inhibits host transcription, possibly through interaction with host DNA repair factor IIH/TFIIH GTF2H5 subunit. This Homo sapiens (Human) protein is Matrix protein (M).